A 241-amino-acid polypeptide reads, in one-letter code: Sensory transduction protein LytT (241 aa).

One can recognise a Response regulatory domain in the interval 3-117 (RVLIVDDEML…RIQQTLKKYK (115 aa)). A 4-aspartylphosphate modification is found at D54. An HTH LytTR-type domain is found at 137–241 (LALSVGESIV…AKELKKLLHI (105 aa)).

In terms of processing, phosphorylated by LytS.

The protein localises to the cytoplasm. Member of the two-component regulatory system LytS/LytT that probably regulates genes involved in cell wall metabolism. The polypeptide is Sensory transduction protein LytT (lytT) (Bacillus subtilis (strain 168)).